A 557-amino-acid polypeptide reads, in one-letter code: Coiled-coil domain-containing protein 22 homolog (557 aa).

Coiled coils occupy residues 260-350 (RLGQ…LQSQ) and 489-554 (ELTA…AGRN).

It belongs to the CCDC22 family.

This Anopheles gambiae (African malaria mosquito) protein is Coiled-coil domain-containing protein 22 homolog.